Consider the following 333-residue polypeptide: Fructose-1,6-bisphosphatase class 1 (333 aa).

Residues glutamate 92, aspartate 113, leucine 115, and aspartate 116 each coordinate Mg(2+). Residues 116–119 (DGSS), asparagine 209, tyrosine 242, and lysine 272 contribute to the substrate site. Glutamate 278 serves as a coordination point for Mg(2+).

It belongs to the FBPase class 1 family. In terms of assembly, homotetramer. The cofactor is Mg(2+).

The protein localises to the cytoplasm. The catalysed reaction is beta-D-fructose 1,6-bisphosphate + H2O = beta-D-fructose 6-phosphate + phosphate. It functions in the pathway carbohydrate biosynthesis; Calvin cycle. This chain is Fructose-1,6-bisphosphatase class 1, found in Chlorobium chlorochromatii (strain CaD3).